A 262-amino-acid polypeptide reads, in one-letter code: Phosphatidylglycerol--prolipoprotein diacylglyceryl transferase 1 (262 aa).

4 helical membrane-spanning segments follow: residues 15 to 35 (WYGI…SINA), 40 to 60 (LNFD…IIGA), 83 to 103 (QGGL…FIYC), and 108 to 128 (VDFL…QGIG). Arg-129 is an a 1,2-diacyl-sn-glycero-3-phospho-(1'-sn-glycerol) binding site. The next 3 membrane-spanning stretches (helical) occupy residues 169–189 (TFLY…IILY), 197–217 (GVVI…IEGL), and 229–249 (VAQL…IIIV).

Belongs to the Lgt family.

Its subcellular location is the cell membrane. The catalysed reaction is L-cysteinyl-[prolipoprotein] + a 1,2-diacyl-sn-glycero-3-phospho-(1'-sn-glycerol) = an S-1,2-diacyl-sn-glyceryl-L-cysteinyl-[prolipoprotein] + sn-glycerol 1-phosphate + H(+). It participates in protein modification; lipoprotein biosynthesis (diacylglyceryl transfer). Functionally, catalyzes the transfer of the diacylglyceryl group from phosphatidylglycerol to the sulfhydryl group of the N-terminal cysteine of a prolipoprotein, the first step in the formation of mature lipoproteins. The polypeptide is Phosphatidylglycerol--prolipoprotein diacylglyceryl transferase 1 (Clostridium perfringens (strain 13 / Type A)).